The sequence spans 97 residues: Protein YukE (97 aa).

Residues Val-21 to Gln-94 adopt a coiled-coil conformation.

The protein belongs to the WXG100 family. sagEsxA-like subfamily. Homodimer.

The protein resides in the secreted. Functionally, required to deliver LXG toxins to target cells. This Bacillus subtilis (strain 168) protein is Protein YukE (yukE).